A 72-amino-acid polypeptide reads, in one-letter code: Translation initiation factor IF-1 2 (72 aa).

Positions 1–72 constitute an S1-like domain; the sequence is MSKDDVIEVE…TRGRIVYRYK (72 aa).

It belongs to the IF-1 family. In terms of assembly, component of the 30S ribosomal translation pre-initiation complex which assembles on the 30S ribosome in the order IF-2 and IF-3, IF-1 and N-formylmethionyl-tRNA(fMet); mRNA recruitment can occur at any time during PIC assembly.

It is found in the cytoplasm. Its function is as follows. One of the essential components for the initiation of protein synthesis. Stabilizes the binding of IF-2 and IF-3 on the 30S subunit to which N-formylmethionyl-tRNA(fMet) subsequently binds. Helps modulate mRNA selection, yielding the 30S pre-initiation complex (PIC). Upon addition of the 50S ribosomal subunit IF-1, IF-2 and IF-3 are released leaving the mature 70S translation initiation complex. This chain is Translation initiation factor IF-1 2, found in Symbiobacterium thermophilum (strain DSM 24528 / JCM 14929 / IAM 14863 / T).